The chain runs to 615 residues: MSSNIAITTEPEGKNKKGLKSDPFIFSISVGFIVVFVIATIALGEKARTTFSAIAGWLLENLGWMYIGGVSLVFIFLMGIFASRYGRVKLGDDDDDPEHTLIVWFCMLFAGGVGAVLMFWGVAEPINHAFNVPMANEESMSEAAIVQAFAYTFYHFGIHMWVIMALPGLSLGYFIYKRKLPPRLSSVFSPILGKHIYSTPGKLIDVLAIVGTTFGIAVSVGLGVLQINAGMNKLWSTPQVSWVQLLIILIITAVACISVASGLDKGIKLLSNINIAMAVALMFFILFTGPTLTLLRFLVESFGIYASWMPNLMFWTDSFQDNPGWQGKWTVFYWAWTICWSPYVGMFVARISRGRTVREFIGGVLALPAIFGVVWFSIFGRAGIEVELSNPGFLTQPTVVEGDVPAALFNVLQEYPLTGIVSAFALVIIVIFFITSIDSAALVNDMFATGAENQTPTSYRVMWACTIGAVAGSLLIISPSSGIATLQEVVIIVAFPFFLVQFVMMFSLLKGMSEDAAAVRRVQTRQWEKTDTPEKLEEHSSQPAPGYDDEGNPLPMPALEHDEDGNIVIPGNVVIEGDLGVVGDVVDDPEEAQEMGSRFKIVEQTRPQSRDEYDI.

Transmembrane regions (helical) follow at residues 24–44, 62–82, 102–122, 156–176, 207–227, 240–260, 275–295, 329–349, 360–380, 417–437, 463–483, and 489–509; these read FIFS…IALG, LGWM…GIFA, IVWF…FWGV, FGIH…YFIY, LAIV…VLQI, VSWV…ISVA, IAMA…LTLL, WTVF…MFVA, FIGG…SIFG, LTGI…ITSI, WACT…SSGI, and VVII…FSLL. 2 disordered regions span residues 524 to 562 and 589 to 615; these read TRQW…LEHD and PEEA…EYDI. 2 stretches are compositionally biased toward basic and acidic residues: residues 526–540 and 600–615; these read QWEK…EEHS and KIVE…EYDI.

This sequence belongs to the BCCT transporter (TC 2.A.15) family.

Its subcellular location is the cell membrane. In terms of biological role, involved in the uptake of osmoprotectants. Can transport ectoine, proline and glycine betaine. Na(+) is probably the coupling ion. This chain is Ectoine/glycine betaine/proline transporter EctP, found in Corynebacterium glutamicum (strain ATCC 13032 / DSM 20300 / JCM 1318 / BCRC 11384 / CCUG 27702 / LMG 3730 / NBRC 12168 / NCIMB 10025 / NRRL B-2784 / 534).